The following is a 1117-amino-acid chain: PR domain zinc finger protein 10 (1117 aa).

Residues 97–142 (QQTPLGGLEAKEEEDEDEDEDTEEDEEEDGEDADLDDWEPDPPRPF) are disordered. The span at 107–136 (KEEEDEDEDEDTEEDEEEDGEDADLDDWEP) shows a compositional bias: acidic residues. The 119-residue stretch at 182 to 300 (LPLVLYIDRF…PKQELKVWYA (119 aa)) folds into the SET domain. An N-terminal PR domain; essential for transcriptional activator activity region spans residues 201 to 305 (IPKRTQLGPV…KVWYAASYAE (105 aa)). A C2H2-type 1 zinc finger spans residues 329 to 351 (WPCYECNRRFISSEQLQQHLNSH). K354 participates in a covalent cross-link: Glycyl lysine isopeptide (Lys-Gly) (interchain with G-Cter in SUMO2). The segment covering 361–381 (TRGRGRGRGKRRFGPGRRPGR) has biased composition (basic residues). Residues 361 to 386 (TRGRGRGRGKRRFGPGRRPGRPPKFI) are disordered. S398 bears the Phosphoserine mark. Phosphothreonine is present on T402. The segment at 440-474 (QETQSSLEHEPETHTLHLQPQHEESVVPTQSTLTA) is disordered. Residues 446–464 (LEHEPETHTLHLQPQHEES) are compositionally biased toward basic and acidic residues. 9 consecutive C2H2-type zinc fingers follow at residues 500–522 (FKCLQCGKAFREKDKLDQHLRFH), 530–552 (LTCDLCNKGFISSASLESHMKLH), 558–580 (YSCIFCPESFDRLDLLKDHVAIH), 586–609 (FTCPTCKKRFPDFIQVKKHVRSFH), 614–636 (YQCTECDKAFCRPDKLRLHMLRH), 642–665 (FLCSTCGKQFKRKDKLREHMQRMH), 697–720 (FKCRLCMMGFRRRGMLVNHLSKRH), 742–765 (YFCQYCDKVYKSASKRKAHILKNH), and 804–827 (VCCPHCSKQYSSKTKMVQHIRKKH). The C-terminal glutamine-rich region; essential for transcriptional activator activity stretch occupies residues 871–1097 (QAMTELSQTL…QTTSQQQTTQ (227 aa)). Disordered stretches follow at residues 919–943 (VAPATSPHQSQQSTVDVGQLHDPQP), 958–1001 (GQPL…SSVQ), and 1066–1094 (QTSALSGGVQVQPPAHSDSLDPQTTSQQQ). Positions 924–934 (SPHQSQQSTVD) are enriched in polar residues.

Belongs to the class V-like SAM-binding methyltransferase superfamily.

The protein resides in the nucleus. Its function is as follows. Transcriptional activator, essential for early embryonic development and survival of embryonic stem cells (ESCs). Supports cell growth and survival during early development by transcriptionally activating the expression of the translation initiation factor EIF3B, to sustain global translation. Activates the transcription of FLNC. The sequence is that of PR domain zinc finger protein 10 (PRDM10) from Pongo abelii (Sumatran orangutan).